The following is a 706-amino-acid chain: Fatty acid oxidation complex subunit alpha (706 aa).

Residues 1–188 (MEKTFSLSRR…KMGLVDDVVP (188 aa)) are enoyl-CoA hydratase. Residues 308-706 (RKVAKAVVLG…AMAAEGKTFY (399 aa)) are 3-hydroxyacyl-CoA dehydrogenase.

This sequence in the N-terminal section; belongs to the enoyl-CoA hydratase/isomerase family. The protein in the central section; belongs to the 3-hydroxyacyl-CoA dehydrogenase family. Heterotetramer of two alpha chains (FadJ) and two beta chains (FadI).

The protein localises to the cytoplasm. It carries out the reaction a (3S)-3-hydroxyacyl-CoA = a (2E)-enoyl-CoA + H2O. It catalyses the reaction a 4-saturated-(3S)-3-hydroxyacyl-CoA = a (3E)-enoyl-CoA + H2O. The catalysed reaction is a (3S)-3-hydroxyacyl-CoA + NAD(+) = a 3-oxoacyl-CoA + NADH + H(+). The enzyme catalyses (3S)-3-hydroxybutanoyl-CoA = (3R)-3-hydroxybutanoyl-CoA. It functions in the pathway lipid metabolism; fatty acid beta-oxidation. Catalyzes the formation of a hydroxyacyl-CoA by addition of water on enoyl-CoA. Also exhibits 3-hydroxyacyl-CoA epimerase and 3-hydroxyacyl-CoA dehydrogenase activities. In Shewanella amazonensis (strain ATCC BAA-1098 / SB2B), this protein is Fatty acid oxidation complex subunit alpha.